The sequence spans 525 residues: Glucose-6-phosphate isomerase (525 aa).

Glu356 functions as the Proton donor in the catalytic mechanism. Active-site residues include His387 and Lys502.

The protein belongs to the GPI family.

The protein localises to the cytoplasm. The catalysed reaction is alpha-D-glucose 6-phosphate = beta-D-fructose 6-phosphate. It participates in carbohydrate biosynthesis; gluconeogenesis. It functions in the pathway carbohydrate degradation; glycolysis; D-glyceraldehyde 3-phosphate and glycerone phosphate from D-glucose: step 2/4. In terms of biological role, catalyzes the reversible isomerization of glucose-6-phosphate to fructose-6-phosphate. In Treponema denticola (strain ATCC 35405 / DSM 14222 / CIP 103919 / JCM 8153 / KCTC 15104), this protein is Glucose-6-phosphate isomerase.